A 642-amino-acid chain; its full sequence is Mediator of RNA polymerase II transcription subunit 17 (642 aa).

Residues 210-232 are disordered; it reads AEETGDEDTASSSNSSSSVSGNN. Residues 220 to 232 show a composition bias toward low complexity; sequence SSSNSSSSVSGNN.

Belongs to the Mediator complex subunit 17 family. Component of the Mediator complex, which includes at least CDK8, MED4, MED6, MED11, MED14, MED17, MED18, MED20, MED21, MED22, MED27, MED28, MED30 and MED31. Interacts with Hsf.

It localises to the nucleus. It is found in the chromosome. Functionally, component of the Mediator complex, a coactivator involved in the regulated transcription of nearly all RNA polymerase II-dependent genes. Mediator functions as a bridge to convey information from gene-specific regulatory proteins to the basal RNA polymerase II transcription machinery. Mediator is recruited to promoters by direct interactions with regulatory proteins and serves as a scaffold for the assembly of a functional preinitiation complex with RNA polymerase II and the general transcription factors. Required for activated transcription of the MtnA, MtnB and MtnD genes. Negatively regulates sex comb development. The polypeptide is Mediator of RNA polymerase II transcription subunit 17 (MED17) (Drosophila melanogaster (Fruit fly)).